We begin with the raw amino-acid sequence, 449 residues long: Hyaluronidase (449 aa).

The N-terminal stretch at 1–23 (MYHLWIKCLAAWIFLKRFNGVHV) is a signal peptide. 2 disulfides stabilise this stretch: C47–C340 and C211–C227. N67 and N103 each carry an N-linked (GlcNAc...) asparagine glycan. E135 acts as the Proton donor in catalysis. An N-linked (GlcNAc...) asparagine glycan is attached at N153. N-linked (GlcNAc...) asparagine glycosylation occurs at N357. 3 cysteine pairs are disulfide-bonded: C365-C376, C370-C427, and C429-C438. N-linked (GlcNAc...) asparagine glycosylation is present at N401. An EGF-like domain is found at 427 to 438 (CQCYQGWQGLYC).

Belongs to the glycosyl hydrolase 56 family. In terms of assembly, monomer. In terms of tissue distribution, expressed by the venom gland.

The protein localises to the secreted. It carries out the reaction Random hydrolysis of (1-&gt;4)-linkages between N-acetyl-beta-D-glucosamine and D-glucuronate residues in hyaluronate.. Snake venom endo-hyaluronidase that degrades hyaluronan to smaller oligosaccharide fragments. In venom, it is not toxic by itself, but increases the diffusion of other venom proteins by degrading the extracellular matrix. In addition, it displays antiedematogenic activity. The protein is Hyaluronidase of Echis ocellatus (Ocellated saw-scaled viper).